A 311-amino-acid polypeptide reads, in one-letter code: tRNA-cytidine(32) 2-sulfurtransferase (311 aa).

A PP-loop motif motif is present at residues 47 to 52; sequence SGGKDS. Positions 122, 125, and 213 each coordinate [4Fe-4S] cluster.

It belongs to the TtcA family. As to quaternary structure, homodimer. Mg(2+) is required as a cofactor. The cofactor is [4Fe-4S] cluster.

It is found in the cytoplasm. It carries out the reaction cytidine(32) in tRNA + S-sulfanyl-L-cysteinyl-[cysteine desulfurase] + AH2 + ATP = 2-thiocytidine(32) in tRNA + L-cysteinyl-[cysteine desulfurase] + A + AMP + diphosphate + H(+). It functions in the pathway tRNA modification. Its function is as follows. Catalyzes the ATP-dependent 2-thiolation of cytidine in position 32 of tRNA, to form 2-thiocytidine (s(2)C32). The sulfur atoms are provided by the cysteine/cysteine desulfurase (IscS) system. The sequence is that of tRNA-cytidine(32) 2-sulfurtransferase from Enterobacter sp. (strain 638).